The sequence spans 301 residues: Acetylglutamate kinase (301 aa).

Substrate contacts are provided by residues 64-65 (GG), Arg-86, and Asn-181.

This sequence belongs to the acetylglutamate kinase family. ArgB subfamily.

The protein resides in the cytoplasm. It catalyses the reaction N-acetyl-L-glutamate + ATP = N-acetyl-L-glutamyl 5-phosphate + ADP. It functions in the pathway amino-acid biosynthesis; L-arginine biosynthesis; N(2)-acetyl-L-ornithine from L-glutamate: step 2/4. In terms of biological role, catalyzes the ATP-dependent phosphorylation of N-acetyl-L-glutamate. This Aliarcobacter butzleri (strain RM4018) (Arcobacter butzleri) protein is Acetylglutamate kinase.